We begin with the raw amino-acid sequence, 540 residues long: Protein PALS2 (540 aa).

L27 domains follow at residues 1 to 48 (MQQV…EDSK) and 49 to 107 (LEAV…YDSP). A PDZ domain is found at 130 to 209 (ILGIHKRAGE…SVTLKILPSY (80 aa)). The region spanning 215–284 (PQQVFVKCHF…PSQFLEEKRK (70 aa)) is the SH3 domain. One can recognise a Guanylate kinase-like domain in the interval 338 to 525 (RKTLVLIGAQ…AFEKLQTAIE (188 aa)). Tyr-500 bears the Phosphotyrosine mark.

It belongs to the MAGUK family. Interacts with CADM1. Interacts with the LIN7 proteins. As to expression, abundant in testis, brain, and kidney with lower levels detectable in other tissues.

The protein localises to the membrane. This Homo sapiens (Human) protein is Protein PALS2.